The sequence spans 281 residues: Nucleotide-binding protein Tpet_1006 (281 aa).

Residue 9 to 16 (GLSGAGKT) coordinates ATP. 58–61 (DVRS) lines the GTP pocket.

Belongs to the RapZ-like family.

Its function is as follows. Displays ATPase and GTPase activities. The chain is Nucleotide-binding protein Tpet_1006 from Thermotoga petrophila (strain ATCC BAA-488 / DSM 13995 / JCM 10881 / RKU-1).